A 565-amino-acid polypeptide reads, in one-letter code: Mitochondrial distribution and morphology protein 34 (565 aa).

An SMP-LTD domain is found at 1–195; that stretch reads MAFNFNWSPL…LPAIIHRLSL (195 aa). 3 disordered regions span residues 207–236, 296–317, and 348–504; these read EDQD…VDAL, PSDQ…LSRT, and STYG…RQLP. A compositionally biased stretch (basic residues) spans 358 to 370; sequence RHSKAHARKRKKR. Positions 371 to 381 are enriched in basic and acidic residues; that stretch reads VVDLRRPKQPE. Residues 382 to 401 show a composition bias toward polar residues; that stretch reads SETASVTDESSFTETTSAPS. Basic and acidic residues-rich tracts occupy residues 446-472 and 483-496; these read LRRD…HAEV and IRHE…EKQE.

This sequence belongs to the MDM34 family. In terms of assembly, component of the ER-mitochondria encounter structure (ERMES) or MDM complex, composed of mmm1, mdm10, mdm12 and mdm34.

It localises to the mitochondrion outer membrane. Its function is as follows. Component of the ERMES/MDM complex, which serves as a molecular tether to connect the endoplasmic reticulum (ER) and mitochondria. Components of this complex are involved in the control of mitochondrial shape and protein biogenesis, and function in nonvesicular lipid trafficking between the ER and mitochondria. Mdm34 is required for the interaction of the ER-resident membrane protein mmm1 and the outer mitochondrial membrane-resident beta-barrel protein mdm10. The protein is Mitochondrial distribution and morphology protein 34 of Aspergillus terreus (strain NIH 2624 / FGSC A1156).